Here is an 842-residue protein sequence, read N- to C-terminus: Protein translocase subunit SecA (842 aa).

Residues Gln91, 109–113, and Asp498 contribute to the ATP site; that span reads GEGKT. Residues 798–824 are compositionally biased toward basic and acidic residues; it reads QGQHVSAEDGKEKVKPQPVVKDNHIGR. The tract at residues 798–827 is disordered; it reads QGQHVSAEDGKEKVKPQPVVKDNHIGRNDP. The Zn(2+) site is built by Cys828, Cys830, Cys839, and Cys840.

It belongs to the SecA family. As to quaternary structure, monomer and homodimer. Part of the essential Sec protein translocation apparatus which comprises SecA, SecYEG and auxiliary proteins SecDF. Other proteins may also be involved. Requires Zn(2+) as cofactor.

The protein localises to the cell membrane. Its subcellular location is the cytoplasm. The enzyme catalyses ATP + H2O + cellular proteinSide 1 = ADP + phosphate + cellular proteinSide 2.. Functionally, part of the Sec protein translocase complex. Interacts with the SecYEG preprotein conducting channel. Has a central role in coupling the hydrolysis of ATP to the transfer of proteins into and across the cell membrane, serving as an ATP-driven molecular motor driving the stepwise translocation of polypeptide chains across the membrane. This Staphylococcus carnosus (strain TM300) protein is Protein translocase subunit SecA.